We begin with the raw amino-acid sequence, 88 residues long: Sec-independent protein translocase protein TatA (88 aa).

The helical transmembrane segment at 1-21 (MGSIGWAQLLIIAVIVVLLFG) threads the bilayer. Residues 41-88 (KAMGDDSQTPPTNVDKTSNDADFAKSITEKQQPVAKAEESKSHEKEQG) are disordered. The span at 46 to 56 (DSQTPPTNVDK) shows a compositional bias: polar residues. A compositionally biased stretch (basic and acidic residues) spans 76 to 88 (KAEESKSHEKEQG).

The protein belongs to the TatA/E family. The Tat system comprises two distinct complexes: a TatABC complex, containing multiple copies of TatA, TatB and TatC subunits, and a separate TatA complex, containing only TatA subunits. Substrates initially bind to the TatABC complex, which probably triggers association of the separate TatA complex to form the active translocon.

The protein resides in the cell inner membrane. In terms of biological role, part of the twin-arginine translocation (Tat) system that transports large folded proteins containing a characteristic twin-arginine motif in their signal peptide across membranes. TatA could form the protein-conducting channel of the Tat system. The sequence is that of Sec-independent protein translocase protein TatA from Yersinia pestis.